The sequence spans 566 residues: Transmembrane protein 151B (566 aa).

The segment covering 1–11 (MSPPGSAAGES) has biased composition (low complexity). The segment at 1 to 25 (MSPPGSAAGESAAGGGGGGGGPGVS) is disordered. Over residues 12 to 23 (AAGGGGGGGGPG) the composition is skewed to gly residues. Transmembrane regions (helical) follow at residues 65 to 85 (CLLL…CHVT) and 112 to 132 (YVYI…VECW). The span at 495–512 (VNEASCPTEQTRLSSQAS) shows a compositional bias: polar residues. The tract at residues 495–529 (VNEASCPTEQTRLSSQASMGDDEDDDEEEAGPPPP) is disordered. Over residues 514-524 (GDDEDDDEEEA) the composition is skewed to acidic residues.

Belongs to the TMEM151 family.

It is found in the membrane. The chain is Transmembrane protein 151B (TMEM151B) from Homo sapiens (Human).